We begin with the raw amino-acid sequence, 241 residues long: Ashwin (241 aa).

Disordered regions lie at residues 1–21 (MAAQ…SARS), 82–102 (KMME…SVTA), and 212–241 (KRSV…CTWP). Positions 11-21 (GGKEERVSARS) are enriched in basic and acidic residues.

Belongs to the ashwin family.

The protein resides in the nucleus. In Gallus gallus (Chicken), this protein is Ashwin.